Here is a 341-residue protein sequence, read N- to C-terminus: Tubulin beta chain (341 aa).

The GTP site is built by Ser64, Gly68, Thr69, Gly70, Asn130, and Asn152.

This sequence belongs to the tubulin family. As to quaternary structure, dimer of alpha and beta chains. A typical microtubule is a hollow water-filled tube with an outer diameter of 25 nm and an inner diameter of 15 nM. Alpha-beta heterodimers associate head-to-tail to form protofilaments running lengthwise along the microtubule wall with the beta-tubulin subunit facing the microtubule plus end conferring a structural polarity. Microtubules usually have 13 protofilaments but different protofilament numbers can be found in some organisms and specialized cells. The cofactor is Mg(2+).

The protein localises to the cytoplasm. It is found in the cytoskeleton. Its function is as follows. Tubulin is the major constituent of microtubules, a cylinder consisting of laterally associated linear protofilaments composed of alpha- and beta-tubulin heterodimers. Microtubules grow by the addition of GTP-tubulin dimers to the microtubule end, where a stabilizing cap forms. Below the cap, tubulin dimers are in GDP-bound state, owing to GTPase activity of alpha-tubulin. The polypeptide is Tubulin beta chain (Haliotis discus (Abalone)).